The following is a 229-amino-acid chain: Molybdenum transport system permease protein ModB (229 aa).

In terms of domain architecture, ABC transmembrane type-1 spans isoleucine 6–leucine 214. The next 5 membrane-spanning stretches (helical) occupy residues valine 12–alanine 32, valine 45–methionine 65, phenylalanine 83–valine 103, phenylalanine 132–phenylalanine 152, and leucine 196–lysine 216.

The protein belongs to the binding-protein-dependent transport system permease family. CysTW subfamily.

The protein resides in the cell inner membrane. Part of the binding-protein-dependent transport system for molybdenum; probably responsible for the translocation of the substrate across the membrane. The sequence is that of Molybdenum transport system permease protein ModB (modB) from Haemophilus influenzae (strain ATCC 51907 / DSM 11121 / KW20 / Rd).